We begin with the raw amino-acid sequence, 395 residues long: Na(+)/H(+) antiporter NhaA (395 aa).

Transmembrane regions (helical) follow at residues 18 to 38 (AGGI…NSPL), 64 to 84 (LLMW…GLEV), 100 to 120 (IFPA…YWLV), 129 to 149 (GGWA…LVLL), 160 to 180 (FLLA…ALFF), 182 to 202 (HDLS…LILL), 205 to 225 (FKVS…VSVL), 226 to 246 (KSGV…PLKG), 266 to 286 (FLIL…GLGM), 295 to 315 (LGVT…FSYL), 333 to 353 (IFAV…LASL), and 368 to 388 (LGIL…LFVT).

Belongs to the NhaA Na(+)/H(+) (TC 2.A.33) antiporter family.

It localises to the cell inner membrane. The enzyme catalyses Na(+)(in) + 2 H(+)(out) = Na(+)(out) + 2 H(+)(in). Na(+)/H(+) antiporter that extrudes sodium in exchange for external protons. This Histophilus somni (strain 129Pt) (Haemophilus somnus) protein is Na(+)/H(+) antiporter NhaA.